The following is a 353-amino-acid chain: Thiamine-phosphate synthase (353 aa).

The segment at 1–128 (MKSMPVAPIA…AASAAAIRYG (128 aa)) is unknown. The segment at 129 to 353 (LYDLEVTVLQ…TSLQLLEALR (225 aa)) is thiamine-phosphate synthase. Residues 185–189 (QYRNK) and asparagine 217 each bind 4-amino-2-methyl-5-(diphosphooxymethyl)pyrimidine. Positions 218 and 237 each coordinate Mg(2+). Serine 256 is a 4-amino-2-methyl-5-(diphosphooxymethyl)pyrimidine binding site. 282 to 284 (TAT) contacts 2-[(2R,5Z)-2-carboxy-4-methylthiazol-5(2H)-ylidene]ethyl phosphate. Residue lysine 285 coordinates 4-amino-2-methyl-5-(diphosphooxymethyl)pyrimidine. Residue glycine 312 coordinates 2-[(2R,5Z)-2-carboxy-4-methylthiazol-5(2H)-ylidene]ethyl phosphate.

This sequence belongs to the thiamine-phosphate synthase family. It depends on Mg(2+) as a cofactor.

The enzyme catalyses 2-[(2R,5Z)-2-carboxy-4-methylthiazol-5(2H)-ylidene]ethyl phosphate + 4-amino-2-methyl-5-(diphosphooxymethyl)pyrimidine + 2 H(+) = thiamine phosphate + CO2 + diphosphate. It catalyses the reaction 2-(2-carboxy-4-methylthiazol-5-yl)ethyl phosphate + 4-amino-2-methyl-5-(diphosphooxymethyl)pyrimidine + 2 H(+) = thiamine phosphate + CO2 + diphosphate. It carries out the reaction 4-methyl-5-(2-phosphooxyethyl)-thiazole + 4-amino-2-methyl-5-(diphosphooxymethyl)pyrimidine + H(+) = thiamine phosphate + diphosphate. Its pathway is cofactor biosynthesis; thiamine diphosphate biosynthesis; thiamine phosphate from 4-amino-2-methyl-5-diphosphomethylpyrimidine and 4-methyl-5-(2-phosphoethyl)-thiazole: step 1/1. Condenses 4-methyl-5-(beta-hydroxyethyl)thiazole monophosphate (THZ-P) and 2-methyl-4-amino-5-hydroxymethyl pyrimidine pyrophosphate (HMP-PP) to form thiamine monophosphate (TMP). In Prochlorococcus marinus (strain MIT 9303), this protein is Thiamine-phosphate synthase.